The following is a 170-amino-acid chain: Lipoprotein signal peptidase (170 aa).

The next 3 helical transmembrane spans lie at 12–32 (WYWVVVLVFLADQLSKQWVLA), 67–87 (WQRWLFTIVAVGFSSLLTVWL), and 93–113 (SLLKLNLAYTLVIGGALGNLV). Residues Asp123 and Asp141 contribute to the active site. The chain crosses the membrane as a helical span at residues 137–157 (FNIADSAIFIGAVLIIWDSFF).

It belongs to the peptidase A8 family.

The protein localises to the cell inner membrane. The enzyme catalyses Release of signal peptides from bacterial membrane prolipoproteins. Hydrolyzes -Xaa-Yaa-Zaa-|-(S,diacylglyceryl)Cys-, in which Xaa is hydrophobic (preferably Leu), and Yaa (Ala or Ser) and Zaa (Gly or Ala) have small, neutral side chains.. It participates in protein modification; lipoprotein biosynthesis (signal peptide cleavage). Functionally, this protein specifically catalyzes the removal of signal peptides from prolipoproteins. This chain is Lipoprotein signal peptidase, found in Shewanella oneidensis (strain ATCC 700550 / JCM 31522 / CIP 106686 / LMG 19005 / NCIMB 14063 / MR-1).